The chain runs to 334 residues: UDP-N-acetylglucosamine 4,6-dehydratase (inverting) (334 aa).

NADP(+) contacts are provided by residues Thr-13–Phe-16, Ser-37–Lys-42, Asp-61–Val-62, Ala-81, Lys-85, and Leu-123–Ser-124. Lys-85 contacts substrate. Lys-127 is an active-site residue. Residues Tyr-135 and Lys-139 each coordinate NADP(+). Asn-167 contacts substrate. Position 168 to 172 (Val-168 to Arg-172) interacts with NADP(+). Substrate-binding residues include Val-175, Thr-193, Arg-252, and Glu-255.

It belongs to the polysaccharide synthase family. As to quaternary structure, homohexamer. The cofactor is NADP(+).

The enzyme catalyses UDP-N-acetyl-alpha-D-glucosamine = UDP-2-acetamido-2,6-dideoxy-beta-L-arabino-hex-4-ulose + H2O. Catalyzes the first step in the biosynthesis of pseudaminic acid, a sialic-acid-like sugar that is used to modify flagellin. Has both C6 dehydratase and C5 epimerase activities that result in the production of both UDP-2-acetamido-2,6-dideoxy-beta-L-arabino-4-hexulose and UDP-2-acetamido-2,6-dideoxy-alpha-D-xylo-4-hexulose. The polypeptide is UDP-N-acetylglucosamine 4,6-dehydratase (inverting) (pseB) (Campylobacter jejuni subsp. jejuni serotype O:23/36 (strain 81-176)).